The following is a 384-amino-acid chain: Lipid-A-disaccharide synthase 1 (384 aa).

It belongs to the LpxB family.

The catalysed reaction is a lipid X + a UDP-2-N,3-O-bis[(3R)-3-hydroxyacyl]-alpha-D-glucosamine = a lipid A disaccharide + UDP + H(+). It participates in bacterial outer membrane biogenesis; LPS lipid A biosynthesis. Functionally, condensation of UDP-2,3-diacylglucosamine and 2,3-diacylglucosamine-1-phosphate to form lipid A disaccharide, a precursor of lipid A, a phosphorylated glycolipid that anchors the lipopolysaccharide to the outer membrane of the cell. In Legionella pneumophila subsp. pneumophila (strain Philadelphia 1 / ATCC 33152 / DSM 7513), this protein is Lipid-A-disaccharide synthase 1.